The sequence spans 163 residues: Large ribosomal subunit protein uL10 (163 aa).

This sequence belongs to the universal ribosomal protein uL10 family. Part of the ribosomal stalk of the 50S ribosomal subunit. The N-terminus interacts with L11 and the large rRNA to form the base of the stalk. The C-terminus forms an elongated spine to which L12 dimers bind in a sequential fashion forming a multimeric L10(L12)X complex.

Functionally, forms part of the ribosomal stalk, playing a central role in the interaction of the ribosome with GTP-bound translation factors. The protein is Large ribosomal subunit protein uL10 of Blochmanniella pennsylvanica (strain BPEN).